The chain runs to 471 residues: 3-isopropylmalate dehydratase large subunit (471 aa).

Cys-347, Cys-407, and Cys-410 together coordinate [4Fe-4S] cluster.

The protein belongs to the aconitase/IPM isomerase family. LeuC type 1 subfamily. As to quaternary structure, heterodimer of LeuC and LeuD. It depends on [4Fe-4S] cluster as a cofactor.

It catalyses the reaction (2R,3S)-3-isopropylmalate = (2S)-2-isopropylmalate. Its pathway is amino-acid biosynthesis; L-leucine biosynthesis; L-leucine from 3-methyl-2-oxobutanoate: step 2/4. Catalyzes the isomerization between 2-isopropylmalate and 3-isopropylmalate, via the formation of 2-isopropylmaleate. This is 3-isopropylmalate dehydratase large subunit from Edwardsiella ictaluri (strain 93-146).